Consider the following 353-residue polypeptide: Photosystem II D2 protein (353 aa).

T2 is subject to N-acetylthreonine. A Phosphothreonine modification is found at T2. Residues 41–61 (CAYFALGGWLTGTTFVTSWYT) traverse the membrane as a helical segment. H118 is a binding site for chlorophyll a. Residues 125–141 (GFMLRQFELARSVQLRP) traverse the membrane as a helical segment. Residues Q130 and N143 each coordinate pheophytin a. A helical transmembrane segment spans residues 153 to 166 (VFVSVFLIYPLGQS). H198 contacts chlorophyll a. The helical transmembrane segment at 208–228 (AALLCAIHGATVENTLFEDGD) threads the bilayer. Residues H215 and F262 each coordinate a plastoquinone. Residue H215 participates in Fe cation binding. Fe cation is bound at residue H269. A helical membrane pass occupies residues 279–295 (GLWMSAIGVVGLALNLR).

This sequence belongs to the reaction center PufL/M/PsbA/D family. PSII is composed of 1 copy each of membrane proteins PsbA, PsbB, PsbC, PsbD, PsbE, PsbF, PsbH, PsbI, PsbJ, PsbK, PsbL, PsbM, PsbT, PsbX, PsbY, PsbZ, Psb30/Ycf12, at least 3 peripheral proteins of the oxygen-evolving complex and a large number of cofactors. It forms dimeric complexes. Requires The D1/D2 heterodimer binds P680, chlorophylls that are the primary electron donor of PSII, and subsequent electron acceptors. It shares a non-heme iron and each subunit binds pheophytin, quinone, additional chlorophylls, carotenoids and lipids. There is also a Cl(-1) ion associated with D1 and D2, which is required for oxygen evolution. The PSII complex binds additional chlorophylls, carotenoids and specific lipids. as cofactor.

Its subcellular location is the plastid. It localises to the chloroplast thylakoid membrane. It catalyses the reaction 2 a plastoquinone + 4 hnu + 2 H2O = 2 a plastoquinol + O2. In terms of biological role, photosystem II (PSII) is a light-driven water:plastoquinone oxidoreductase that uses light energy to abstract electrons from H(2)O, generating O(2) and a proton gradient subsequently used for ATP formation. It consists of a core antenna complex that captures photons, and an electron transfer chain that converts photonic excitation into a charge separation. The D1/D2 (PsbA/PsbD) reaction center heterodimer binds P680, the primary electron donor of PSII as well as several subsequent electron acceptors. D2 is needed for assembly of a stable PSII complex. The chain is Photosystem II D2 protein from Zygnema circumcarinatum (Green alga).